Consider the following 470-residue polypeptide: ATP synthase subunit beta (470 aa).

157–164 (GGAGVGKT) lines the ATP pocket.

It belongs to the ATPase alpha/beta chains family. F-type ATPases have 2 components, CF(1) - the catalytic core - and CF(0) - the membrane proton channel. CF(1) has five subunits: alpha(3), beta(3), gamma(1), delta(1), epsilon(1). CF(0) has three main subunits: a(1), b(2) and c(9-12). The alpha and beta chains form an alternating ring which encloses part of the gamma chain. CF(1) is attached to CF(0) by a central stalk formed by the gamma and epsilon chains, while a peripheral stalk is formed by the delta and b chains.

The protein localises to the cell membrane. It carries out the reaction ATP + H2O + 4 H(+)(in) = ADP + phosphate + 5 H(+)(out). Its function is as follows. Produces ATP from ADP in the presence of a proton gradient across the membrane. The catalytic sites are hosted primarily by the beta subunits. The chain is ATP synthase subunit beta from Pelotomaculum thermopropionicum (strain DSM 13744 / JCM 10971 / SI).